A 1939-amino-acid chain; its full sequence is Myosin heavy chain, skeletal muscle, adult (1939 aa).

The residue at position 2 (alanine 2) is an N-acetylalanine. Residues 34–83 form the Myosin N-terminal SH3-like domain; sequence DAKSSVFVVHPKESFVKGTIQSKEGGKVTVKTEGGETLTVKEDQVFSMNP. Lysine 36 is modified (N6-methyllysine). One can recognise a Myosin motor domain in the interval 87-781; that stretch reads DKIEDMAMMT…LLGLLEEMRD (695 aa). An N6,N6,N6-trimethyllysine modification is found at lysine 131. 180–187 contributes to the ATP binding site; the sequence is GESGAGKT. Residue lysine 552 is modified to N6,N6,N6-trimethyllysine. The segment at 658–680 is actin-binding; the sequence is LNKLMANLRSTHPHFVRCIIPNE. Residue histidine 756 is modified to Pros-methylhistidine. The interval 760-774 is actin-binding; sequence RFGHTKVFFKAGLLG. The IQ domain maps to 784-813; sequence LAEIITRTQARCRGFLMRVEYRRMVERRES. The tract at residues 839–841 is hinge; sequence IKP. Residues 842 to 1939 adopt a coiled-coil conformation; it reads LLKSAESEKE…IHGKKIEEEE (1098 aa).

The protein belongs to the TRAFAC class myosin-kinesin ATPase superfamily. Myosin family. As to quaternary structure, muscle myosin is a hexameric protein that consists of 2 heavy chain subunits (MHC), 2 alkali light chain subunits (MLC) and 2 regulatory light chain subunits (MLC-2).

It localises to the cytoplasm. The protein localises to the myofibril. Functionally, muscle contraction. Myosin is a protein that binds to F-actin and has ATPase activity that is activated by F-actin. The sequence is that of Myosin heavy chain, skeletal muscle, adult from Gallus gallus (Chicken).